We begin with the raw amino-acid sequence, 92 residues long: Small ribosomal subunit protein uS19 (92 aa).

This sequence belongs to the universal ribosomal protein uS19 family.

In terms of biological role, protein S19 forms a complex with S13 that binds strongly to the 16S ribosomal RNA. This chain is Small ribosomal subunit protein uS19, found in Prochlorococcus marinus (strain MIT 9312).